A 428-amino-acid polypeptide reads, in one-letter code: Acetyltransferase sirH (428 aa).

N-linked (GlcNAc...) asparagine glycosylation occurs at Asn8. Transmembrane regions (helical) follow at residues Leu33–Leu53, Val55–Ser75, Ala78–Val98, Leu305–Ser325, Gly329–Leu349, and Phe366–Phe386.

This sequence belongs to the wax synthase family.

The protein resides in the membrane. It functions in the pathway polyketide biosynthesis. Acetyltransferase; part of the gene cluster that mediates the biosynthesis of asperlin, a polyketide showing anti-inflammatory, antitumor and antibiotic activities. The first step of the asperlin biosynthesis is the production of the intermediate 2,4,6-octatrienoic acid by the highly redusing polyketide synthase alnA with cleavage of the PKS product by the esterase alnB. 2,4,6-octatrienoic acid is further converted to asperlin via several steps involving the remaining enzymes from the cluster. In Emericella nidulans (strain FGSC A4 / ATCC 38163 / CBS 112.46 / NRRL 194 / M139) (Aspergillus nidulans), this protein is Acetyltransferase sirH.